A 385-amino-acid polypeptide reads, in one-letter code: Homoserine O-succinyltransferase (385 aa).

An AB hydrolase-1 domain is found at 51-360; that stretch reads NAVLICHALS…DSPHGHDAFL (310 aa). S157 acts as the Nucleophile in catalysis. Substrate is bound at residue R227. Residues D323 and H356 contribute to the active site. D357 is a substrate binding site.

It belongs to the AB hydrolase superfamily. MetX family. As to quaternary structure, homodimer.

It localises to the cytoplasm. The enzyme catalyses L-homoserine + succinyl-CoA = O-succinyl-L-homoserine + CoA. The protein operates within amino-acid biosynthesis; L-methionine biosynthesis via de novo pathway; O-succinyl-L-homoserine from L-homoserine: step 1/1. Functionally, transfers a succinyl group from succinyl-CoA to L-homoserine, forming succinyl-L-homoserine. The sequence is that of Homoserine O-succinyltransferase from Hahella chejuensis (strain KCTC 2396).